Consider the following 1180-residue polypeptide: Nonsense-mediated mRNA decay factor SMG7 (1180 aa).

TPR repeat units lie at residues 151–184 (QHCLVHLGDIARYRNQTSQAESYYRHAAQLVPSN) and 186–218 (QPYNQLAILASSKGDHLTTIFYYCRSIAVKFPF). Disordered regions lie at residues 496–636 (PQEK…TQTT), 692–795 (QTAS…SYMQ), 893–913 (CSDQENMPRGPPYEDNKSSPL), 1019–1127 (SLFE…WAAQ), and 1148–1180 (SSMMQPGPSALEQLLMQQKQKQQRGHGNMNPPH). Over residues 504–520 (LQESSNGEQTPNESTHG) the composition is skewed to polar residues. Basic and acidic residues-rich tracts occupy residues 547–559 (ENIKPREQSREQN), 584–606 (NEQKKEGKRKSEVKKNSHDKTTD), and 615–627 (TELRKTPVSEARK). Polar residues predominate over residues 692-718 (QTASHPQSANPVQTGKPSHIPYSQQRP). A compositionally biased stretch (pro residues) spans 728-740 (PPQPQQTQPPPPQ). Residues 741 to 778 (TSQQALQQSVQLQLQQQQQQQQQQQQQQQQSPTKQSSQ) are compositionally biased toward low complexity. The span at 1026–1038 (WSPSLPASSDHST) shows a compositional bias: polar residues. A compositionally biased stretch (low complexity) spans 1039–1065 (PASQSPHSSNPSSLPSSPPTHSHGSMP). The segment covering 1076 to 1090 (DSRDRRANDRWKAEK) has biased composition (basic and acidic residues). The segment covering 1103–1125 (SASTSSVPETNSWHQGAPTSTWA) has biased composition (polar residues).

The protein localises to the cytoplasm. Its subcellular location is the nucleus. Functionally, plays a role in nonsense-mediated mRNA decay. Recruits UPF1 to cytoplasmic mRNA decay bodies. Together with SMG5 is thought to provide a link to the mRNA degradation machinery involving exonucleolytic pathways, and to serve as an adapter for UPF1 to protein phosphatase 2A (PP2A), thereby triggering UPF1 dephosphorylation. Required for normal embryonic development. This chain is Nonsense-mediated mRNA decay factor SMG7, found in Danio rerio (Zebrafish).